We begin with the raw amino-acid sequence, 252 residues long: Small ribosomal subunit protein eS1A (252 aa).

Ala-2 bears the N-acetylalanine; partial mark.

This sequence belongs to the eukaryotic ribosomal protein eS1 family. As to quaternary structure, component of the small ribosomal subunit (SSU). Mature yeast ribosomes consist of a small (40S) and a large (60S) subunit. The 40S small subunit contains 1 molecule of ribosomal RNA (18S rRNA) and at least 33 different proteins. The large 60S subunit contains 3 rRNA molecules (25S, 5.8S and 5S rRNA) and at least 46 different proteins. eS1 interacts directly with uS11 and eS26, which form part of the mRNA exit tunnel.

It localises to the cytoplasm. Functionally, component of the ribosome, a large ribonucleoprotein complex responsible for the synthesis of proteins in the cell. The small ribosomal subunit (SSU) binds messenger RNAs (mRNAs) and translates the encoded message by selecting cognate aminoacyl-transfer RNA (tRNA) molecules. The large subunit (LSU) contains the ribosomal catalytic site termed the peptidyl transferase center (PTC), which catalyzes the formation of peptide bonds, thereby polymerizing the amino acids delivered by tRNAs into a polypeptide chain. The nascent polypeptides leave the ribosome through a tunnel in the LSU and interact with protein factors that function in enzymatic processing, targeting, and the membrane insertion of nascent chains at the exit of the ribosomal tunnel. The protein is Small ribosomal subunit protein eS1A (rps101) of Schizosaccharomyces pombe (strain 972 / ATCC 24843) (Fission yeast).